A 409-amino-acid chain; its full sequence is Type II methyltransferase M.BsuFI (409 aa).

The SAM-dependent MTase C5-type domain maps to 101–402; it reads LTFIDLFAGI…GAMKERLLLA (302 aa). The active site involves cysteine 170.

This sequence belongs to the class I-like SAM-binding methyltransferase superfamily. C5-methyltransferase family.

The catalysed reaction is a 2'-deoxycytidine in DNA + S-adenosyl-L-methionine = a 5-methyl-2'-deoxycytidine in DNA + S-adenosyl-L-homocysteine + H(+). Its function is as follows. A methylase, recognizes the double-stranded sequence 5'-CCGG-3', methylates C-1 on both strands, and protects the DNA from cleavage by the BsuFI endonuclease. The chain is Type II methyltransferase M.BsuFI (hsdFM) from Bacillus subtilis.